A 470-amino-acid chain; its full sequence is Protein nucleotidyltransferase YdiU (470 aa).

ATP contacts are provided by glycine 86, glycine 88, arginine 89, lysine 109, aspartate 121, glycine 122, arginine 172, and arginine 179. Aspartate 244 serves as the catalytic Proton acceptor. Residues asparagine 245 and aspartate 254 each contribute to the Mg(2+) site. Aspartate 254 lines the ATP pocket.

Belongs to the SELO family. The cofactor is Mg(2+). Mn(2+) serves as cofactor.

The catalysed reaction is L-seryl-[protein] + ATP = 3-O-(5'-adenylyl)-L-seryl-[protein] + diphosphate. It carries out the reaction L-threonyl-[protein] + ATP = 3-O-(5'-adenylyl)-L-threonyl-[protein] + diphosphate. It catalyses the reaction L-tyrosyl-[protein] + ATP = O-(5'-adenylyl)-L-tyrosyl-[protein] + diphosphate. The enzyme catalyses L-histidyl-[protein] + UTP = N(tele)-(5'-uridylyl)-L-histidyl-[protein] + diphosphate. The catalysed reaction is L-seryl-[protein] + UTP = O-(5'-uridylyl)-L-seryl-[protein] + diphosphate. It carries out the reaction L-tyrosyl-[protein] + UTP = O-(5'-uridylyl)-L-tyrosyl-[protein] + diphosphate. In terms of biological role, nucleotidyltransferase involved in the post-translational modification of proteins. It can catalyze the addition of adenosine monophosphate (AMP) or uridine monophosphate (UMP) to a protein, resulting in modifications known as AMPylation and UMPylation. This chain is Protein nucleotidyltransferase YdiU, found in Roseobacter denitrificans (strain ATCC 33942 / OCh 114) (Erythrobacter sp. (strain OCh 114)).